A 323-amino-acid chain; its full sequence is tRNA U34 carboxymethyltransferase (323 aa).

Carboxy-S-adenosyl-L-methionine-binding positions include Lys-90, Trp-104, Lys-109, Gly-129, 182 to 183 (IE), Met-197, Tyr-201, and Arg-316.

It belongs to the class I-like SAM-binding methyltransferase superfamily. CmoB family. As to quaternary structure, homotetramer.

The catalysed reaction is carboxy-S-adenosyl-L-methionine + 5-hydroxyuridine(34) in tRNA = 5-carboxymethoxyuridine(34) in tRNA + S-adenosyl-L-homocysteine + H(+). Functionally, catalyzes carboxymethyl transfer from carboxy-S-adenosyl-L-methionine (Cx-SAM) to 5-hydroxyuridine (ho5U) to form 5-carboxymethoxyuridine (cmo5U) at position 34 in tRNAs. This chain is tRNA U34 carboxymethyltransferase, found in Idiomarina loihiensis (strain ATCC BAA-735 / DSM 15497 / L2-TR).